The following is an 867-amino-acid chain: MSTVMNTQYRKPLPGTALDYFDTREAIEAIAPGAYAKLPYTSRVLAENLVRRCEPEMLTASLKQIIESKQELDFPWFPARVVCHDILGQTALVDLAGLRDAIAAKGGDPAQVNPVVPTQLIVDHSLAVEYGGFDKDAFAKNRAIEDRRNEDRFHFINWTQKAFKNIDVIPQGNGIMHQINLERMSPVIHARNGVAFPDTLVGTDSHTPHVDALGVIAIGVGGLEAESVMLGRASYMRLPDIIGVELTGKPQPGITATDIVLALTEFLRAQKVVSSYLEFFGEGAEALTLGDRATISNMTPEFGATAAMFYIDQQTLDYLTLTGREAEQVKLVETYAKTAGLWSDDLKQAVYPRTLHFDLSSVVRTIAGPSNPHARVPTSELAARGISGEVENEPGLMPDGAVIIAAITSCTNTSNPRNVIAAGLLARNANAKGLTRKPWVKTSLAPGSKAVQLYLEEANLLPELESLGFGIVGFACTTCNGMSGALDPVIQQEVIDRDLYATAVLSGNRNFDGRIHPYAKQAFLASPPLVVAYAIAGTIRFDIEKDVLGLDKDGKPVRLINIWPSDAEIDAVIAASVKPEQFRKVYEPMFDLSVDYGDKVSPLYDWRPQSTYIRRPPYWEGALAGERTLKGMRPLAVLGDNITTDHLSPSNAIMMDSAAGEYLHKMGLPEEDFNSYATHRGDHLTAQRATFANPKLKNEMAIVDGKVKQGSLARIEPEGIVTRMWEAIETYMDRKQPLIIIAGADYGQGSSRDWAAKGVRLAGVEAIVAEGFERIHRTNLVGMGVLPLEFKAGENRATYGIDGTEVFDVIGSIAPRADLTVIITRKNGERVEVPVTCRLDTAEEVSIYEAGGVLQRFAQDFLESNLK.

Positions 410, 476, and 479 each coordinate [4Fe-4S] cluster.

It belongs to the aconitase/IPM isomerase family. Requires [4Fe-4S] cluster as cofactor.

It catalyses the reaction (2S,3S)-2-methylcitrate = 2-methyl-trans-aconitate + H2O. It carries out the reaction citrate = D-threo-isocitrate. It functions in the pathway organic acid metabolism; propanoate degradation. With respect to regulation, inhibited by ferricyanide and EDTA. In terms of biological role, involved in the catabolism of short chain fatty acids (SCFA) via the 2-methylcitrate cycle II (propionate degradation route). In vivo under anaerobic conditions, AcnD catalyzes the stereospecific dehydration of (2S,3S)-methylcitrate (2-MC) to yield the trans isomer of 2-methyl-aconitate (2-MCA). AcnD can also accept citrate and cis-aconitate, but with a lower efficiency. 2-methylisocitrate and isocitrate are not substrates. The polypeptide is 2-methylcitrate dehydratase (2-methyl-trans-aconitate forming) (acnD) (Shewanella oneidensis (strain ATCC 700550 / JCM 31522 / CIP 106686 / LMG 19005 / NCIMB 14063 / MR-1)).